Here is a 142-residue protein sequence, read N- to C-terminus: Large ribosomal subunit protein uL13 (142 aa).

This sequence belongs to the universal ribosomal protein uL13 family. In terms of assembly, part of the 50S ribosomal subunit.

Functionally, this protein is one of the early assembly proteins of the 50S ribosomal subunit, although it is not seen to bind rRNA by itself. It is important during the early stages of 50S assembly. The protein is Large ribosomal subunit protein uL13 of Shewanella putrefaciens (strain CN-32 / ATCC BAA-453).